Here is a 335-residue protein sequence, read N- to C-terminus: Acetyl-coenzyme A carboxylase carboxyl transferase subunit alpha (335 aa).

Residues 48–308 enclose the CoA carboxyltransferase C-terminal domain; sequence TLELKVDALR…KEILIEELKA (261 aa).

This sequence belongs to the AccA family. As to quaternary structure, acetyl-CoA carboxylase is a heterohexamer composed of biotin carboxyl carrier protein (AccB), biotin carboxylase (AccC) and two subunits each of ACCase subunit alpha (AccA) and ACCase subunit beta (AccD).

The protein localises to the cytoplasm. The enzyme catalyses N(6)-carboxybiotinyl-L-lysyl-[protein] + acetyl-CoA = N(6)-biotinyl-L-lysyl-[protein] + malonyl-CoA. Its pathway is lipid metabolism; malonyl-CoA biosynthesis; malonyl-CoA from acetyl-CoA: step 1/1. Functionally, component of the acetyl coenzyme A carboxylase (ACC) complex. First, biotin carboxylase catalyzes the carboxylation of biotin on its carrier protein (BCCP) and then the CO(2) group is transferred by the carboxyltransferase to acetyl-CoA to form malonyl-CoA. The sequence is that of Acetyl-coenzyme A carboxylase carboxyl transferase subunit alpha from Pelodictyon phaeoclathratiforme (strain DSM 5477 / BU-1).